Reading from the N-terminus, the 158-residue chain is PTS system fructose-specific EIIB component (158 aa).

The PTS EIIB type-2 domain occupies 1–98 (MKLVAVTSCP…AEAVVQKAVE (98 aa)). Cys-9 serves as the catalytic Phosphocysteine intermediate. Cys-9 is subject to Phosphocysteine; by EIIA. Residues 104–147 (KTGSVTFGSGDDGEDADVGADDSSDDADAAESDEPVRRGGDPEK) form a disordered region. Positions 114-136 (DDGEDADVGADDSSDDADAAESD) are enriched in acidic residues. Residues 137 to 147 (EPVRRGGDPEK) show a composition bias toward basic and acidic residues.

The protein resides in the cytoplasm. The catalysed reaction is D-fructose(out) + N(pros)-phospho-L-histidyl-[protein] = D-fructose 1-phosphate(in) + L-histidyl-[protein]. Functionally, the phosphoenolpyruvate-dependent sugar phosphotransferase system (sugar PTS), a major carbohydrate active transport system, catalyzes the phosphorylation of incoming sugar substrates concomitantly with their translocation across the cell membrane. The enzyme II PtfABC PTS system is involved in fructose transport. This chain is PTS system fructose-specific EIIB component, found in Haloferax volcanii (strain ATCC 29605 / DSM 3757 / JCM 8879 / NBRC 14742 / NCIMB 2012 / VKM B-1768 / DS2) (Halobacterium volcanii).